Here is a 288-residue protein sequence, read N- to C-terminus: MLPVSVKSFAKINLGLLITSKRSDGYHTLETVFAPIDWYDTLEFSPSDTLSMCCTDSALPVDENNLCMRAAKALQESAGCSTGVSITLDKRIPFGAGLGGGSSDAATVLGMLNEFWNVRASLADLHILAVRLGADVPYFLEMKGLAFAKGIGDELEDLSLRLPFHIVTVFPEVHISTVWAYKHFYPRFERTSPDLRPLVTALCLEGERSCLGAFENDFEPAVFDHYPGVKKVKQDLLDSGSFFASLSGSGSAVFGFFDKREDADDALMMMREQGFRTSITAPDFSMVR.

The active site involves Lys11. 93–103 (PFGAGLGGGSS) lines the ATP pocket. The active site involves Asp135.

The protein belongs to the GHMP kinase family. IspE subfamily.

It carries out the reaction 4-CDP-2-C-methyl-D-erythritol + ATP = 4-CDP-2-C-methyl-D-erythritol 2-phosphate + ADP + H(+). The protein operates within isoprenoid biosynthesis; isopentenyl diphosphate biosynthesis via DXP pathway; isopentenyl diphosphate from 1-deoxy-D-xylulose 5-phosphate: step 3/6. Catalyzes the phosphorylation of the position 2 hydroxy group of 4-diphosphocytidyl-2C-methyl-D-erythritol. The chain is 4-diphosphocytidyl-2-C-methyl-D-erythritol kinase from Chlorobium limicola (strain DSM 245 / NBRC 103803 / 6330).